A 200-amino-acid polypeptide reads, in one-letter code: Oligoribonuclease (200 aa).

The 165-residue stretch at 5–169 (MVWIDCEMTG…ADIRESIAEL (165 aa)) folds into the Exonuclease domain. The active site involves tyrosine 126.

The protein belongs to the oligoribonuclease family.

The protein localises to the cytoplasm. 3'-to-5' exoribonuclease specific for small oligoribonucleotides. The sequence is that of Oligoribonuclease from Streptomyces avermitilis (strain ATCC 31267 / DSM 46492 / JCM 5070 / NBRC 14893 / NCIMB 12804 / NRRL 8165 / MA-4680).